The following is a 160-amino-acid chain: UPF0479 membrane protein YER190C-B (160 aa).

2 helical membrane passes run 39–59 (IVFC…KVLQ) and 136–156 (VPMI…ISQH).

It belongs to the UPF0479 family.

It localises to the membrane. This chain is UPF0479 membrane protein YER190C-B, found in Saccharomyces cerevisiae (strain ATCC 204508 / S288c) (Baker's yeast).